Here is a 461-residue protein sequence, read N- to C-terminus: Serine carboxypeptidase-like 45 (461 aa).

An N-terminal signal peptide occupies residues M1–S24. Cystine bridges form between C86-C340, C243-C261, and C286-C309. An N-linked (GlcNAc...) asparagine glycan is attached at N168. Residue S177 is part of the active site. Residue N244 is glycosylated (N-linked (GlcNAc...) asparagine). Active-site residues include D377 and H434.

The protein belongs to the peptidase S10 family. In terms of tissue distribution, ubiquitous.

It localises to the secreted. Functionally, probable carboxypeptidase. The polypeptide is Serine carboxypeptidase-like 45 (SCPL45) (Arabidopsis thaliana (Mouse-ear cress)).